The sequence spans 80 residues: Bowman-Birk type proteinase inhibitor (80 aa).

7 disulfides stabilise this stretch: C19–C70, C20–C35, C23–C66, C25–C33, C41–C47, C44–C59, and C49–C57.

As to quaternary structure, occurs as a monomer, dimer or trimer. The dimer may be the active form. Post-translationally, binds calcium, probably through His-3 to His-6.

Protease inhibitor with activity against cysteine, aspartic and serine proteases. Highest activity against serine proteases, in particular trypsin and trypsin-like proteases. This Phaseolus acutifolius (Tepary bean) protein is Bowman-Birk type proteinase inhibitor.